The chain runs to 727 residues: AN1-type zinc finger protein 4 (727 aa).

The region spanning 28–103 (MELFIETLTG…LKLVLAMRGG (76 aa)) is the Ubiquitin-like domain. 2 disordered regions span residues 187–217 (HRMSGGSMYNSDTDEDEETEPSSSGQQIIEN) and 238–264 (KKPKKAVKIKPHPPVAPRPSSGSTAPS). Residues 238–248 (KKPKKAVKIKP) show a composition bias toward basic residues. The AN1-type zinc finger occupies 661–708 (KKTTNHCFLCGKKTGLASSYECRCGNNFCASHRYAETHGCTYDYKSAG). Residues cysteine 667, cysteine 670, cysteine 682, cysteine 684, cysteine 689, histidine 692, histidine 698, and cysteine 700 each coordinate Zn(2+).

This is AN1-type zinc finger protein 4 (ZFAND4) from Homo sapiens (Human).